The chain runs to 251 residues: Ditrans,polycis-undecaprenyl-diphosphate synthase ((2E,6E)-farnesyl-diphosphate specific) (251 aa).

Asp29 is a catalytic residue. Asp29 provides a ligand contact to Mg(2+). Substrate contacts are provided by residues 30 to 33, Trp34, Arg42, His46, and 74 to 76; these read GNGK and SSD. The active-site Proton acceptor is Asn77. Substrate contacts are provided by residues Trp78, Arg80, Arg197, and 203–205; that span reads RLS. Residue Glu216 participates in Mg(2+) binding.

It belongs to the UPP synthase family. As to quaternary structure, homodimer. Mg(2+) is required as a cofactor.

It catalyses the reaction 8 isopentenyl diphosphate + (2E,6E)-farnesyl diphosphate = di-trans,octa-cis-undecaprenyl diphosphate + 8 diphosphate. Its function is as follows. Catalyzes the sequential condensation of isopentenyl diphosphate (IPP) with (2E,6E)-farnesyl diphosphate (E,E-FPP) to yield (2Z,6Z,10Z,14Z,18Z,22Z,26Z,30Z,34E,38E)-undecaprenyl diphosphate (di-trans,octa-cis-UPP). UPP is the precursor of glycosyl carrier lipid in the biosynthesis of bacterial cell wall polysaccharide components such as peptidoglycan and lipopolysaccharide. The protein is Ditrans,polycis-undecaprenyl-diphosphate synthase ((2E,6E)-farnesyl-diphosphate specific) of Buchnera aphidicola subsp. Baizongia pistaciae (strain Bp).